The following is a 246-amino-acid chain: Pyridoxine 5'-phosphate synthase (246 aa).

Residue N12 participates in 3-amino-2-oxopropyl phosphate binding. Residue 14–15 coordinates 1-deoxy-D-xylulose 5-phosphate; it reads DH. R23 contributes to the 3-amino-2-oxopropyl phosphate binding site. Residue H48 is the Proton acceptor of the active site. The 1-deoxy-D-xylulose 5-phosphate site is built by R50 and H55. The active-site Proton acceptor is the E75. T105 is a binding site for 1-deoxy-D-xylulose 5-phosphate. Residue H196 is the Proton donor of the active site. Residues G197 and 218-219 contribute to the 3-amino-2-oxopropyl phosphate site; that span reads GH.

The protein belongs to the PNP synthase family. Homooctamer; tetramer of dimers.

It localises to the cytoplasm. The enzyme catalyses 3-amino-2-oxopropyl phosphate + 1-deoxy-D-xylulose 5-phosphate = pyridoxine 5'-phosphate + phosphate + 2 H2O + H(+). It functions in the pathway cofactor biosynthesis; pyridoxine 5'-phosphate biosynthesis; pyridoxine 5'-phosphate from D-erythrose 4-phosphate: step 5/5. Its function is as follows. Catalyzes the complicated ring closure reaction between the two acyclic compounds 1-deoxy-D-xylulose-5-phosphate (DXP) and 3-amino-2-oxopropyl phosphate (1-amino-acetone-3-phosphate or AAP) to form pyridoxine 5'-phosphate (PNP) and inorganic phosphate. In Thioalkalivibrio sulfidiphilus (strain HL-EbGR7), this protein is Pyridoxine 5'-phosphate synthase.